A 478-amino-acid polypeptide reads, in one-letter code: Glycogen synthase (478 aa).

ADP-alpha-D-glucose is bound at residue K15.

Belongs to the glycosyltransferase 1 family. Bacterial/plant glycogen synthase subfamily.

It catalyses the reaction [(1-&gt;4)-alpha-D-glucosyl](n) + ADP-alpha-D-glucose = [(1-&gt;4)-alpha-D-glucosyl](n+1) + ADP + H(+). It functions in the pathway glycan biosynthesis; glycogen biosynthesis. Functionally, synthesizes alpha-1,4-glucan chains using ADP-glucose. This chain is Glycogen synthase, found in Clostridium botulinum (strain Eklund 17B / Type B).